The primary structure comprises 682 residues: DNA-directed RNA polymerase subunit beta' (682 aa).

Zn(2+)-binding residues include C69, C71, C87, and C90. Mg(2+) is bound by residues D489, D491, and D493.

This sequence belongs to the RNA polymerase beta' chain family. RpoC1 subfamily. As to quaternary structure, in plastids the minimal PEP RNA polymerase catalytic core is composed of four subunits: alpha, beta, beta', and beta''. When a (nuclear-encoded) sigma factor is associated with the core the holoenzyme is formed, which can initiate transcription. Mg(2+) is required as a cofactor. It depends on Zn(2+) as a cofactor.

It is found in the plastid. The protein localises to the chloroplast. The enzyme catalyses RNA(n) + a ribonucleoside 5'-triphosphate = RNA(n+1) + diphosphate. DNA-dependent RNA polymerase catalyzes the transcription of DNA into RNA using the four ribonucleoside triphosphates as substrates. This is DNA-directed RNA polymerase subunit beta' from Platanus occidentalis (Sycamore).